The following is a 491-amino-acid chain: UDP-N-acetylmuramate--L-alanine ligase (491 aa).

126–132 (GTHGKTT) is an ATP binding site.

It belongs to the MurCDEF family.

Its subcellular location is the cytoplasm. The enzyme catalyses UDP-N-acetyl-alpha-D-muramate + L-alanine + ATP = UDP-N-acetyl-alpha-D-muramoyl-L-alanine + ADP + phosphate + H(+). The protein operates within cell wall biogenesis; peptidoglycan biosynthesis. Its function is as follows. Cell wall formation. In Salmonella arizonae (strain ATCC BAA-731 / CDC346-86 / RSK2980), this protein is UDP-N-acetylmuramate--L-alanine ligase.